A 136-amino-acid polypeptide reads, in one-letter code: Protein PsiE (136 aa).

Transmembrane regions (helical) follow at residues 15–35 (ILQT…VVFL), 55–75 (YELV…ALIV), 82–102 (FHFP…RLII), and 108–128 (PLDV…LWLC).

This sequence belongs to the PsiE family.

It is found in the cell inner membrane. This is Protein PsiE from Escherichia coli O17:K52:H18 (strain UMN026 / ExPEC).